The chain runs to 327 residues: Porphobilinogen deaminase (327 aa).

Cys-251 is modified (S-(dipyrrolylmethanemethyl)cysteine).

This sequence belongs to the HMBS family. The cofactor is dipyrromethane.

It carries out the reaction 4 porphobilinogen + H2O = hydroxymethylbilane + 4 NH4(+). It participates in porphyrin-containing compound metabolism; protoporphyrin-IX biosynthesis; coproporphyrinogen-III from 5-aminolevulinate: step 2/4. Functionally, tetrapolymerization of the monopyrrole PBG into the hydroxymethylbilane pre-uroporphyrinogen in several discrete steps. The sequence is that of Porphobilinogen deaminase (HEM3) from Kluyveromyces lactis (strain ATCC 8585 / CBS 2359 / DSM 70799 / NBRC 1267 / NRRL Y-1140 / WM37) (Yeast).